The following is a 463-amino-acid chain: FAD-dependent monooxygenase str9 (463 aa).

FAD contacts are provided by Glu-37, Gly-50, and Arg-114. The active site involves Arg-200. Residue Asp-334 participates in FAD binding.

This sequence belongs to the paxM FAD-dependent monooxygenase family.

It functions in the pathway mycotoxin biosynthesis. Its function is as follows. FAD-dependent monooxygenase; part of the gene cluster that mediates the biosynthesis of strobilurin A, an antifungal polyketide that contains a key beta-methoxyacrylate toxophore that targets the complex III of the mitochondrial electron transport chain. Strobilurin biosynthesis begins with construction of benzoyl CoA by step-wise elimination of ammonia from phenylalanine by the phenylalanine ammonia-lyase str11, oxygenation by str8 and retro-Claisen reaction to form benzoic acid, which is activated to its CoA thiolester benzoyl CoA by the dedicated CoA ligase str10. Benzoyl CoA forms the starter unit for the highly reducing polyketide synthase stpks1 that produces the polyketide prestrobilutin A. The FAD-dependent oxygenase str9 then catalyzes the key oxidative rearrangement responsible for the creation of the beta-methoxyacrylate toxophore. Str9 performs epoxidation of the 2,3 olefin of prestrobilutin A, followed by Meinwald rearrangement to furnish the aldehyde intermediate. Rapid enolization of the aldehyde intermediate would give the beta-methoxyacrylate skeleton and methylations catalyzed by str2 and str3 complete the synthesis and lead to the production of strobilurin A. The short-chain dehydrogenase stl2 and the dehydrogenase str4 play a role in the shunt pathway leading to the production of bolineol. The cluster encodes no obvious halogenase gene that could be involved in production of strobilurin B, nor any obvious dimethylallyl-transferase that could be involved in the production of strobilurin G. It is possible that unknown proteins encoded in, or near, the cluster (such as str1 or stl1) may form new classes of halogenases or dimethylally-transferases, or that the responsible genes are located elsewhere on the genome. Similarly, proteins encoded by str5/str6 hydrolases appear to have no chemical role in the biosynthesis of strobilurin A. Finally, no obvious self-resistance gene is found within the cluster. In Strobilurus tenacellus, this protein is FAD-dependent monooxygenase str9.